The sequence spans 396 residues: Elongation factor Tu 1 (396 aa).

One can recognise a tr-type G domain in the interval 10–206 (KPHCNVGTIG…AVDDYIPQPE (197 aa)). The interval 19–26 (GHVDHGKT) is G1. Residue 19 to 26 (GHVDHGKT) coordinates GTP. Thr26 is a Mg(2+) binding site. The tract at residues 60–64 (GITIS) is G2. Residues 81–84 (DCPG) form a G3 region. Residues 81-85 (DCPGH) and 136-139 (NKCD) each bind GTP. The tract at residues 136 to 139 (NKCD) is G4. A G5 region spans residues 174-176 (SAL).

The protein belongs to the TRAFAC class translation factor GTPase superfamily. Classic translation factor GTPase family. EF-Tu/EF-1A subfamily. In terms of assembly, monomer.

It is found in the cytoplasm. It catalyses the reaction GTP + H2O = GDP + phosphate + H(+). Its function is as follows. GTP hydrolase that promotes the GTP-dependent binding of aminoacyl-tRNA to the A-site of ribosomes during protein biosynthesis. This Rhodospirillum rubrum (strain ATCC 11170 / ATH 1.1.1 / DSM 467 / LMG 4362 / NCIMB 8255 / S1) protein is Elongation factor Tu 1.